The primary structure comprises 243 residues: Urease accessory protein UreF (243 aa).

It belongs to the UreF family. In terms of assembly, ureD, UreF and UreG form a complex that acts as a GTP-hydrolysis-dependent molecular chaperone, activating the urease apoprotein by helping to assemble the nickel containing metallocenter of UreC. The UreE protein probably delivers the nickel.

Its subcellular location is the cytoplasm. Functionally, required for maturation of urease via the functional incorporation of the urease nickel metallocenter. The sequence is that of Urease accessory protein UreF from Rhodopseudomonas palustris (strain BisB5).